A 129-amino-acid polypeptide reads, in one-letter code: Small ribosomal subunit protein bS6 (129 aa).

This sequence belongs to the bacterial ribosomal protein bS6 family.

Functionally, binds together with bS18 to 16S ribosomal RNA. This chain is Small ribosomal subunit protein bS6, found in Microcystis aeruginosa (strain NIES-843 / IAM M-2473).